The following is a 448-amino-acid chain: Phosphoglucosamine mutase (448 aa).

Residue Ser-99 is the Phosphoserine intermediate of the active site. The Mg(2+) site is built by Ser-99, Asp-238, Asp-240, and Asp-242. Residue Ser-99 is modified to Phosphoserine.

Belongs to the phosphohexose mutase family. The cofactor is Mg(2+). Post-translationally, activated by phosphorylation.

The catalysed reaction is alpha-D-glucosamine 1-phosphate = D-glucosamine 6-phosphate. Its function is as follows. Catalyzes the conversion of glucosamine-6-phosphate to glucosamine-1-phosphate. This chain is Phosphoglucosamine mutase, found in Marinomonas sp. (strain MWYL1).